We begin with the raw amino-acid sequence, 367 residues long: Gibberellin 20 oxidase 3 (367 aa).

Residues 198-304 enclose the Fe2OG dioxygenase domain; it reads DGDPVMRLNH…RRSLTFFLNP (107 aa). Tyrosine 208 contacts 2-oxoglutarate. Fe cation contacts are provided by histidine 223, aspartate 225, and histidine 285. 2-oxoglutarate-binding residues include arginine 295 and serine 297.

The protein belongs to the iron/ascorbate-dependent oxidoreductase family. It depends on Fe(2+) as a cofactor. The cofactor is L-ascorbate.

It catalyses the reaction gibberellin A12 + 2 2-oxoglutarate + 3 O2 + H(+) = gibberellin A9 + 2 succinate + 3 CO2 + 2 H2O. The enzyme catalyses gibberellin A53 + 2 2-oxoglutarate + 3 O2 + H(+) = gibberellin A20 + 2 succinate + 3 CO2 + 2 H2O. Functionally, key oxidase enzyme in the biosynthesis of gibberellin. Catalyzes the formation of bioactive gibberellins (GAs) via a three-step oxidation at C-20 of the GA skeleton. Controls the elongation of the vegetative shoot and plant height by the regulation of active gibberellin levels. The sequence is that of Gibberellin 20 oxidase 3 from Oryza sativa subsp. japonica (Rice).